Reading from the N-terminus, the 380-residue chain is Putative zinc finger protein C02F5.12 (380 aa).

Residues 137-187 (NLDIPGTSSDIPSDPSSALKVPKKEVLDESEEILDQTSGSSSFSLNDSEQA) are disordered. Polar residues-rich tracts occupy residues 142-152 (GTSSDIPSDPS) and 171-187 (DQTS…SEQA). The segment at 271–294 (IPCKLCGFECTNVRRMRSHYAKAH) adopts a C2H2-type zinc-finger fold.

It localises to the nucleus. The protein is Putative zinc finger protein C02F5.12 of Caenorhabditis elegans.